The primary structure comprises 245 residues: 1-(5-phosphoribosyl)-5-[(5-phosphoribosylamino)methylideneamino] imidazole-4-carboxamide isomerase (245 aa).

Residue Asp7 is the Proton acceptor of the active site. Catalysis depends on Asp129, which acts as the Proton donor.

Belongs to the HisA/HisF family.

It localises to the cytoplasm. The catalysed reaction is 1-(5-phospho-beta-D-ribosyl)-5-[(5-phospho-beta-D-ribosylamino)methylideneamino]imidazole-4-carboxamide = 5-[(5-phospho-1-deoxy-D-ribulos-1-ylimino)methylamino]-1-(5-phospho-beta-D-ribosyl)imidazole-4-carboxamide. Its pathway is amino-acid biosynthesis; L-histidine biosynthesis; L-histidine from 5-phospho-alpha-D-ribose 1-diphosphate: step 4/9. The sequence is that of 1-(5-phosphoribosyl)-5-[(5-phosphoribosylamino)methylideneamino] imidazole-4-carboxamide isomerase from Citrobacter koseri (strain ATCC BAA-895 / CDC 4225-83 / SGSC4696).